The chain runs to 704 residues: Glycine--tRNA ligase beta subunit (704 aa).

Belongs to the class-II aminoacyl-tRNA synthetase family. In terms of assembly, tetramer of two alpha and two beta subunits.

The protein localises to the cytoplasm. The enzyme catalyses tRNA(Gly) + glycine + ATP = glycyl-tRNA(Gly) + AMP + diphosphate. In Rhizobium etli (strain CIAT 652), this protein is Glycine--tRNA ligase beta subunit.